Consider the following 329-residue polypeptide: Acetyl-coenzyme A carboxylase carboxyl transferase subunit alpha (329 aa).

The 255-residue stretch at 40–294 folds into the CoA carboxyltransferase C-terminal domain; the sequence is QLETLAARRR…KESLIRNLRE (255 aa).

It belongs to the AccA family. Acetyl-CoA carboxylase is a heterohexamer composed of biotin carboxyl carrier protein (AccB), biotin carboxylase (AccC) and two subunits each of ACCase subunit alpha (AccA) and ACCase subunit beta (AccD).

It is found in the cytoplasm. It catalyses the reaction N(6)-carboxybiotinyl-L-lysyl-[protein] + acetyl-CoA = N(6)-biotinyl-L-lysyl-[protein] + malonyl-CoA. It functions in the pathway lipid metabolism; malonyl-CoA biosynthesis; malonyl-CoA from acetyl-CoA: step 1/1. Functionally, component of the acetyl coenzyme A carboxylase (ACC) complex. First, biotin carboxylase catalyzes the carboxylation of biotin on its carrier protein (BCCP) and then the CO(2) group is transferred by the carboxyltransferase to acetyl-CoA to form malonyl-CoA. In Prochlorococcus marinus (strain MIT 9211), this protein is Acetyl-coenzyme A carboxylase carboxyl transferase subunit alpha.